Consider the following 52-residue polypeptide: UPF0181 protein NTHI1697 (52 aa).

Belongs to the UPF0181 family.

This is UPF0181 protein NTHI1697 from Haemophilus influenzae (strain 86-028NP).